Here is a 900-residue protein sequence, read N- to C-terminus: Alanine--tRNA ligase (900 aa).

The Zn(2+) site is built by His580, His584, Cys683, and His687.

It belongs to the class-II aminoacyl-tRNA synthetase family. Zn(2+) serves as cofactor.

The protein localises to the cytoplasm. The catalysed reaction is tRNA(Ala) + L-alanine + ATP = L-alanyl-tRNA(Ala) + AMP + diphosphate. Functionally, catalyzes the attachment of alanine to tRNA(Ala) in a two-step reaction: alanine is first activated by ATP to form Ala-AMP and then transferred to the acceptor end of tRNA(Ala). Also edits incorrectly charged Ser-tRNA(Ala) and Gly-tRNA(Ala) via its editing domain. The chain is Alanine--tRNA ligase from Mycolicibacterium paratuberculosis (strain ATCC BAA-968 / K-10) (Mycobacterium paratuberculosis).